A 418-amino-acid polypeptide reads, in one-letter code: Serine hydroxymethyltransferase (418 aa).

Residues Leu-120 and 124–126 (GHL) each bind (6S)-5,6,7,8-tetrahydrofolate. N6-(pyridoxal phosphate)lysine is present on Lys-229.

It belongs to the SHMT family. In terms of assembly, homodimer. Pyridoxal 5'-phosphate serves as cofactor.

Its subcellular location is the cytoplasm. It catalyses the reaction (6R)-5,10-methylene-5,6,7,8-tetrahydrofolate + glycine + H2O = (6S)-5,6,7,8-tetrahydrofolate + L-serine. Its pathway is one-carbon metabolism; tetrahydrofolate interconversion. It participates in amino-acid biosynthesis; glycine biosynthesis; glycine from L-serine: step 1/1. In terms of biological role, catalyzes the reversible interconversion of serine and glycine with tetrahydrofolate (THF) serving as the one-carbon carrier. This reaction serves as the major source of one-carbon groups required for the biosynthesis of purines, thymidylate, methionine, and other important biomolecules. Also exhibits THF-independent aldolase activity toward beta-hydroxyamino acids, producing glycine and aldehydes, via a retro-aldol mechanism. The sequence is that of Serine hydroxymethyltransferase from Myxococcus xanthus (strain DK1622).